A 299-amino-acid polypeptide reads, in one-letter code: Phosphoribosylaminoimidazole-succinocarboxamide synthase (299 aa).

Belongs to the SAICAR synthetase family.

The catalysed reaction is 5-amino-1-(5-phospho-D-ribosyl)imidazole-4-carboxylate + L-aspartate + ATP = (2S)-2-[5-amino-1-(5-phospho-beta-D-ribosyl)imidazole-4-carboxamido]succinate + ADP + phosphate + 2 H(+). The protein operates within purine metabolism; IMP biosynthesis via de novo pathway; 5-amino-1-(5-phospho-D-ribosyl)imidazole-4-carboxamide from 5-amino-1-(5-phospho-D-ribosyl)imidazole-4-carboxylate: step 1/2. This Maridesulfovibrio salexigens (strain ATCC 14822 / DSM 2638 / NCIMB 8403 / VKM B-1763) (Desulfovibrio salexigens) protein is Phosphoribosylaminoimidazole-succinocarboxamide synthase.